The primary structure comprises 183 residues: Cyanate hydratase (183 aa).

Residues Arg118, Glu121, and Ser144 contribute to the active site.

It belongs to the cyanase family.

It catalyses the reaction cyanate + hydrogencarbonate + 3 H(+) = NH4(+) + 2 CO2. Functionally, catalyzes the reaction of cyanate with bicarbonate to produce ammonia and carbon dioxide. This chain is Cyanate hydratase, found in Cryptococcus neoformans var. neoformans serotype D (strain B-3501A) (Filobasidiella neoformans).